The sequence spans 618 residues: NAD(P)H-quinone oxidoreductase subunit 5, organellar chromatophore 2 (618 aa).

Helical transmembrane passes span 16 to 36 (LIPI…TGWI), 43 to 63 (TPAY…SLAL), 99 to 119 (LAAL…ALGY), 129 to 149 (FFAL…SDSL), 152 to 172 (SYFL…FWYA), 190 to 210 (GDVM…GMEF), 220 to 240 (NTLT…GPIG), 267 to 287 (SVVV…LHHS), 291 to 311 (IAVL…VSIA), 318 to 335 (TLSY…IAIA), 348 to 368 (AHAI…AVSN), 390 to 410 (LIAG…CFGL), 419 to 438 (APWF…LNLT), 461 to 481 (WQMA…PWMM), 495 to 515 (AITG…GAIV), 553 to 573 (IVSG…NGFV), and 597 to 617 (SYIL…SWLV).

This sequence belongs to the complex I subunit 5 family. NDH is composed of at least 16 different subunits, 5 of which are encoded in the nucleus.

It is found in the plastid. The protein resides in the organellar chromatophore thylakoid membrane. The catalysed reaction is a plastoquinone + NADH + (n+1) H(+)(in) = a plastoquinol + NAD(+) + n H(+)(out). It catalyses the reaction a plastoquinone + NADPH + (n+1) H(+)(in) = a plastoquinol + NADP(+) + n H(+)(out). Its function is as follows. NDH shuttles electrons from NAD(P)H:plastoquinone, via FMN and iron-sulfur (Fe-S) centers, to quinones in the photosynthetic chain and possibly in a chloroplast respiratory chain. The immediate electron acceptor for the enzyme in this species is believed to be plastoquinone. Couples the redox reaction to proton translocation, and thus conserves the redox energy in a proton gradient. The polypeptide is NAD(P)H-quinone oxidoreductase subunit 5, organellar chromatophore 2 (ndhF2) (Paulinella chromatophora).